The chain runs to 308 residues: MTEHPEQQYLDAMARAWYGGDERVDRTGVGTKSLFGVTMRFDLSDGTVPLITTKKIFWKSAIKELIWFLSGDTNIRPLVMQNVHIWTDWPLDKYRKATGEAIDRDAFERRIVDDPAFAAEWGDLGPVYGKQWVDWPRYTPAGDGLFRREEKGVNQIAELVGMLRANPSSRRLIFTGWNVPELPGMALPPCHMTYQYHVAGGRLSGILYQRSCDLGLGFPFNIFEAAVLIRMLAQQADLEPGELVWMGADTHVYSNHGHLVEEQLSRSPRPFPRLSLARKPADMFSYALDDFVIEGYDPHPHIKAEVAV.

Residues Arg-26 and 170-171 (RR) contribute to the dUMP site. The active-site Nucleophile is the Cys-190. DUMP-binding positions include 210–213 (RSCD), Asn-221, and 251–253 (HVY). Residue Asp-213 participates in (6R)-5,10-methylene-5,6,7,8-tetrahydrofolate binding. A (6R)-5,10-methylene-5,6,7,8-tetrahydrofolate-binding site is contributed by Ala-307.

This sequence belongs to the thymidylate synthase family. Bacterial-type ThyA subfamily. In terms of assembly, homodimer.

The protein resides in the cytoplasm. It catalyses the reaction dUMP + (6R)-5,10-methylene-5,6,7,8-tetrahydrofolate = 7,8-dihydrofolate + dTMP. It functions in the pathway pyrimidine metabolism; dTTP biosynthesis. Catalyzes the reductive methylation of 2'-deoxyuridine-5'-monophosphate (dUMP) to 2'-deoxythymidine-5'-monophosphate (dTMP) while utilizing 5,10-methylenetetrahydrofolate (mTHF) as the methyl donor and reductant in the reaction, yielding dihydrofolate (DHF) as a by-product. This enzymatic reaction provides an intracellular de novo source of dTMP, an essential precursor for DNA biosynthesis. The chain is Thymidylate synthase from Rhizorhabdus wittichii (strain DSM 6014 / CCUG 31198 / JCM 15750 / NBRC 105917 / EY 4224 / RW1) (Sphingomonas wittichii).